Reading from the N-terminus, the 76-residue chain is Alpha/kappa-conotoxin-like fe14.2 (76 aa).

Residues 1–24 form the signal peptide; sequence MPSVRSVTCCCLLWMMLSVQLVTP. A propeptide spanning residues 25–39 is cleaved from the precursor; that stretch reads GSPGTAQLSGQRTAR. Disulfide bonds link Cys-46-Cys-61 and Cys-50-Cys-63. Arg-64 is subject to Arginine amide. Residues 65 to 76 constitute a propeptide that is removed on maturation; that stretch reads GKRDVVSSSMAV.

It belongs to the conotoxin J superfamily. Expressed by the venom duct.

The protein resides in the secreted. Functionally, highly inhibits both nicotinic acetylcholine receptors (neuronal (alpha-3/beta-4) and muscular (alpha-1/beta-1/epsilon/delta) subtypes) and the voltage-gated potassium channel Kv1.6/KCNA6 subtype. The protein is Alpha/kappa-conotoxin-like fe14.2 of Conus ferrugineus (Cone snail).